The following is a 163-amino-acid chain: Transcriptional repressor NrdR (163 aa).

A zinc finger spans residues 3–34 (CPSCNSESSRVVDSRSIEMGVSIRRRRECSEC). An ATP-cone domain is found at 46 to 136 (LLVVKRNGVT…VYKSFNCAED (91 aa)).

This sequence belongs to the NrdR family. Zn(2+) is required as a cofactor.

Negatively regulates transcription of bacterial ribonucleotide reductase nrd genes and operons by binding to NrdR-boxes. The chain is Transcriptional repressor NrdR from Corynebacterium jeikeium (strain K411).